Consider the following 1230-residue polypeptide: ATP-dependent helicase/nuclease subunit A (1230 aa).

The region spanning 3 to 473 (TKFTKNQQRA…IDLADNFRSQ (471 aa)) is the UvrD-like helicase ATP-binding domain. Position 24-31 (24-31 (ASAGSGKT)) interacts with ATP. In terms of domain architecture, UvrD-like helicase C-terminal spans 500–782 (EAKLVPKAAY…RIMTIHASKG (283 aa)).

The protein belongs to the helicase family. AddA subfamily. As to quaternary structure, heterodimer of AddA and AddB/RexB. Mg(2+) serves as cofactor.

It catalyses the reaction Couples ATP hydrolysis with the unwinding of duplex DNA by translocating in the 3'-5' direction.. The catalysed reaction is ATP + H2O = ADP + phosphate + H(+). Its function is as follows. The heterodimer acts as both an ATP-dependent DNA helicase and an ATP-dependent, dual-direction single-stranded exonuclease. Recognizes the chi site generating a DNA molecule suitable for the initiation of homologous recombination. The AddA nuclease domain is required for chi fragment generation; this subunit has the helicase and 3' -&gt; 5' nuclease activities. This chain is ATP-dependent helicase/nuclease subunit A, found in Leuconostoc mesenteroides subsp. mesenteroides (strain ATCC 8293 / DSM 20343 / BCRC 11652 / CCM 1803 / JCM 6124 / NCDO 523 / NBRC 100496 / NCIMB 8023 / NCTC 12954 / NRRL B-1118 / 37Y).